Here is a 257-residue protein sequence, read N- to C-terminus: Aspartate/glutamate leucyltransferase (257 aa).

Belongs to the R-transferase family. Bpt subfamily.

The protein resides in the cytoplasm. The enzyme catalyses N-terminal L-glutamyl-[protein] + L-leucyl-tRNA(Leu) = N-terminal L-leucyl-L-glutamyl-[protein] + tRNA(Leu) + H(+). It carries out the reaction N-terminal L-aspartyl-[protein] + L-leucyl-tRNA(Leu) = N-terminal L-leucyl-L-aspartyl-[protein] + tRNA(Leu) + H(+). Its function is as follows. Functions in the N-end rule pathway of protein degradation where it conjugates Leu from its aminoacyl-tRNA to the N-termini of proteins containing an N-terminal aspartate or glutamate. This chain is Aspartate/glutamate leucyltransferase, found in Nitrobacter hamburgensis (strain DSM 10229 / NCIMB 13809 / X14).